A 320-amino-acid chain; its full sequence is Transcription factor bHLH34 (320 aa).

Residues 162 to 213 (SKPGTKACREKLRREKLNDKFMDLSSVLEPGRTPKTDKSAILDDAIRVVNQL) form the bHLH domain. Positions 299–320 (WSPLPPADRDTSRDLKNLPPVA) are disordered. Over residues 305–314 (ADRDTSRDLK) the composition is skewed to basic and acidic residues.

As to quaternary structure, homodimer. Expressed constitutively in roots, leaves, stems, and flowers.

It localises to the nucleus. The protein is Transcription factor bHLH34 (BHLH34) of Arabidopsis thaliana (Mouse-ear cress).